Reading from the N-terminus, the 317-residue chain is Ribosomal RNA small subunit methyltransferase H (317 aa).

S-adenosyl-L-methionine is bound by residues 37 to 39, D56, F85, D106, and Q113; that span reads AGH.

The protein belongs to the methyltransferase superfamily. RsmH family.

Its subcellular location is the cytoplasm. It catalyses the reaction cytidine(1402) in 16S rRNA + S-adenosyl-L-methionine = N(4)-methylcytidine(1402) in 16S rRNA + S-adenosyl-L-homocysteine + H(+). Functionally, specifically methylates the N4 position of cytidine in position 1402 (C1402) of 16S rRNA. This is Ribosomal RNA small subunit methyltransferase H from Lactococcus lactis subsp. lactis (strain IL1403) (Streptococcus lactis).